We begin with the raw amino-acid sequence, 147 residues long: Protein OPG060 (147 aa).

This sequence belongs to the orthopoxvirus OPG058 family.

This Bos taurus (Bovine) protein is Protein OPG060 (OPG060).